The primary structure comprises 241 residues: Phosphoribosylaminoimidazole-succinocarboxamide synthase (241 aa).

The protein belongs to the SAICAR synthetase family.

It carries out the reaction 5-amino-1-(5-phospho-D-ribosyl)imidazole-4-carboxylate + L-aspartate + ATP = (2S)-2-[5-amino-1-(5-phospho-beta-D-ribosyl)imidazole-4-carboxamido]succinate + ADP + phosphate + 2 H(+). It functions in the pathway purine metabolism; IMP biosynthesis via de novo pathway; 5-amino-1-(5-phospho-D-ribosyl)imidazole-4-carboxamide from 5-amino-1-(5-phospho-D-ribosyl)imidazole-4-carboxylate: step 1/2. In Bacillus subtilis (strain 168), this protein is Phosphoribosylaminoimidazole-succinocarboxamide synthase (purC).